A 496-amino-acid chain; its full sequence is Cyclin-dependent kinase 16 (496 aa).

Positions 1 to 97 (MDRMKKIKRQ…TSSDEVQSPV (97 aa)) are disordered. S12 carries the phosphoserine; by BRSK2 modification. Phosphoserine occurs at positions 36, 42, 64, 65, 78, 82, and 89. The segment covering 69-78 (IVHEDLKMGS) has biased composition (basic and acidic residues). Positions 83 to 93 (DQASATSSDEV) are enriched in polar residues. S95 bears the Phosphoserine; by CDK5 mark. 6 positions are modified to phosphoserine: S110, S119, S138, S146, S153, and S155. Positions 165 to 446 (YIKLDKLGEG…AEDAMKHPFF (282 aa)) constitute a Protein kinase domain. Residues 171 to 179 (LGEGTYATV) and K194 each bind ATP. T175 is modified (phosphothreonine). The active-site Proton acceptor is the D286. T380 carries the phosphothreonine modification. Phosphoserine occurs at positions 391, 478, and 480.

The protein belongs to the protein kinase superfamily. CMGC Ser/Thr protein kinase family. CDC2/CDKX subfamily. As to quaternary structure, found in a complex containing CABLES1, CDK17 and TDRD7. Interacts with BRSK2. Identified in a complex with NSF, syntaxin-1, synaptotagmin, SYN1, SYP and CDK5R1. Interacts with YWHAH, YWHAQ and YWHAZ. Interacts with CCNY; this interaction increases the CDK16 kinase activity. Interacts with CCNYL1; this interaction mutually increases the stability of CDK16 and CCNYL1 and increases the kinase activity of CDK16. Interacts with NSF. Post-translationally, phosphorylation of CDK16 is essential for the binding of CCNY, but also essential for the regulation of CDK16 kinase activity. Phosphorylation of CDK16 is essential for the binding of CCNYl1, but also essential for the regulation of CDK16 kinase activity. Ser-146 and Ser-153 are the most critical sites for the binding of CCNYL1 and for modulating CDK16 kinase activity. Phosphorylation at Ser-153 inhibits kinase activity. Detected in pancreas islets (at protein level). Detected in brain and pancreas.

The protein localises to the cytoplasm. It localises to the cytoplasmic vesicle. Its subcellular location is the secretory vesicle. It is found in the cell membrane. The protein resides in the synapse. The protein localises to the synaptosome. The catalysed reaction is L-seryl-[protein] + ATP = O-phospho-L-seryl-[protein] + ADP + H(+). The enzyme catalyses L-threonyl-[protein] + ATP = O-phospho-L-threonyl-[protein] + ADP + H(+). Functionally, protein kinase that plays a role in vesicle-mediated transport processes and exocytosis. Regulates GH1 release by brain neurons. Phosphorylates NSF, and thereby regulates NSF oligomerization. Required for normal spermatogenesis. Regulates neuron differentiation and dendrite development. Plays a role in the regulation of insulin secretion in response to changes in blood glucose levels. Can phosphorylate CCNY at 'Ser-336' (in vitro). The chain is Cyclin-dependent kinase 16 (CDK16) from Homo sapiens (Human).